A 113-amino-acid polypeptide reads, in one-letter code: UPF0342 protein SpyM3_0545 (113 aa).

This sequence belongs to the UPF0342 family.

The chain is UPF0342 protein SpyM3_0545 from Streptococcus pyogenes serotype M3 (strain ATCC BAA-595 / MGAS315).